The chain runs to 356 residues: Cyanuric acid amidohydrolase (356 aa).

Residues 1–99 (MPIAKVHRIA…FLVFERAEGN (99 aa)) are RU A. Substrate-binding positions include R52 and 79–80 (SG). The segment at 106–243 (ALAIGRAHTP…HEIVVLGMSE (138 aa)) is RU B. Residue K156 is part of the active site. Substrate is bound by residues R188 and 226–227 (SS). The active-site Nucleophile is S226. An RU C region spans residues 249–356 (LAIAHGVMAD…VAVIAARTMG (108 aa)). E287 lines the Mg(2+) pocket. Substrate contacts are provided by residues R314 and 333 to 334 (SG). Residues G336, Q339, G340, P341, and G344 each coordinate Mg(2+).

Belongs to the cyclic amide hydrolase (CyAH) family. Homotetramer.

The enzyme catalyses cyanurate + H2O = 1-carboxybiuret + H(+). It participates in xenobiotic degradation; atrazine degradation; biuret from cyanurate: step 1/1. With respect to regulation, inhibited by barbituric acid. Its function is as follows. Responsible for the hydrolysis of cyanuric acid, an intermediate formed during catabolism of s-triazine based compounds in herbicides such as atrazine and polymers such as melamine. Catalyzes the hydrolytic opening of the s-triazine ring of cyanuric acid (2,4,6-trihydroxy-s-triazine) to yield carbon dioxide and carboxybiuret, which spontaneously decarboxylates to biuret. In Azorhizobium caulinodans (strain ATCC 43989 / DSM 5975 / JCM 20966 / LMG 6465 / NBRC 14845 / NCIMB 13405 / ORS 571), this protein is Cyanuric acid amidohydrolase.